The primary structure comprises 119 residues: Membrane-anchored ubiquitin-fold protein 6 (119 aa).

The Ubiquitin-like domain occupies 8 to 76 (IELKFRLADG…NNRTLAESRL (69 aa)). A lipid anchor (S-palmitoyl cysteine) is attached at cysteine 114. Cysteine methyl ester is present on cysteine 116. The S-geranylgeranyl cysteine moiety is linked to residue cysteine 116. Positions 117–119 (TIL) are cleaved as a propeptide — removed in mature form.

As to expression, ubiquitous.

Its subcellular location is the cell membrane. May serve as docking site to facilitate the association of other proteins to the plasma membrane. This chain is Membrane-anchored ubiquitin-fold protein 6 (MUB6), found in Arabidopsis thaliana (Mouse-ear cress).